A 594-amino-acid polypeptide reads, in one-letter code: Pre-mRNA-processing protein 45 (594 aa).

5 disordered regions span residues 36 to 63 (TTEY…RKGW), 223 to 254 (PPRF…TAQD), 370 to 426 (ETGI…SEMR), 498 to 523 (AGSS…SKDR), and 566 to 594 (EQFM…ARDE). 2 stretches are compositionally biased toward pro residues: residues 44-53 (APLPATPGPQ) and 235-244 (PAEPPPPVLQ). Positions 383 to 397 (GSEEESDEEEEDEEA) are enriched in acidic residues. Basic and acidic residues-rich tracts occupy residues 398 to 417 (IRER…KEMR), 513 to 523 (EGIKEEMSKDR), and 578 to 594 (RTAE…ARDE).

This sequence belongs to the SNW family. As to quaternary structure, associated with the spliceosome.

The protein localises to the nucleus. Involved in pre-mRNA splicing. The protein is Pre-mRNA-processing protein 45 (PRP45) of Cryptococcus neoformans var. neoformans serotype D (strain B-3501A) (Filobasidiella neoformans).